The chain runs to 359 residues: Fructose-bisphosphate aldolase (359 aa).

Ser50 is a binding site for D-glyceraldehyde 3-phosphate. Asp83 serves as the catalytic Proton donor. His84, Asp105, Glu142, and His198 together coordinate Zn(2+). Residue Gly199 coordinates dihydroxyacetone phosphate. His232 is a binding site for Zn(2+). Dihydroxyacetone phosphate contacts are provided by residues 233–235 and 275–278; these read GSS and NIDT.

It belongs to the class II fructose-bisphosphate aldolase family. In terms of assembly, homodimer. The cofactor is Zn(2+).

The enzyme catalyses beta-D-fructose 1,6-bisphosphate = D-glyceraldehyde 3-phosphate + dihydroxyacetone phosphate. The protein operates within carbohydrate biosynthesis; Calvin cycle. It participates in carbohydrate degradation; glycolysis; D-glyceraldehyde 3-phosphate and glycerone phosphate from D-glucose: step 4/4. Catalyzes the aldol condensation of dihydroxyacetone phosphate (DHAP or glycerone-phosphate) with glyceraldehyde 3-phosphate (G3P) to form fructose 1,6-bisphosphate (FBP) in gluconeogenesis and the reverse reaction in glycolysis. This is Fructose-bisphosphate aldolase (cbbA) from Rhizobium meliloti (strain 1021) (Ensifer meliloti).